We begin with the raw amino-acid sequence, 1032 residues long: Probable ATP-dependent RNA helicase DDX46 (1032 aa).

Positions 1-24 are enriched in basic residues; sequence MGRESRHYRKRSASRGRSGSRSRS. A disordered region spans residues 1-228; sequence MGRESRHYRK…EMEGEELDPL (228 aa). G2 is lipidated: N-myristoyl glycine. Residues 26-49 are compositionally biased toward basic and acidic residues; the sequence is SPSDKRSKRGDDRRSRSRDRDRRR. 2 stretches are compositionally biased toward basic residues: residues 50–73 and 81–103; these read ERSR…RSRS and ERRR…RRSR. Residues 112–200 are compositionally biased toward basic and acidic residues; it reads KKTENRSRSK…EMKQGKKWSL (89 aa). Positions 152 to 197 form a coiled coil; it reads DQNKLEEEMRKRKERVEKWREEQRKKAMENIGELKKEIEEMKQGKK. K186 is covalently cross-linked (Glycyl lysine isopeptide (Lys-Gly) (interchain with G-Cter in SUMO2)). Position 199 is a phosphoserine (S199). Acidic residues-rich tracts occupy residues 201–211 and 219–228; these read EDDDDDEDDPA and EMEGEELDPL. The residue at position 263 (K263) is an N6-acetyllysine. The residue at position 294 (Y294) is a Phosphotyrosine. Phosphoserine is present on residues S295 and S296. K325 is covalently cross-linked (Glycyl lysine isopeptide (Lys-Gly) (interchain with G-Cter in SUMO2)). S346 is modified (phosphoserine). The Q motif motif lies at 372 to 400; it reads KSWVQCGISMKILNSLKKHGYEKPTPIQT. Residues 403–581 form the Helicase ATP-binding domain; the sequence is IPAIMSGRDL…RRILSKPIEV (179 aa). 416–423 is a binding site for ATP; it reads AKTGSGKT. A DEAD box motif is present at residues 529-532; that stretch reads DEAD. The 162-residue stretch at 592-753 folds into the Helicase C-terminal domain; it reads DVEQQVIVIE…AVPPDLEKLW (162 aa). At K776 the chain carries N6-acetyllysine. K779 participates in a covalent cross-link: Glycyl lysine isopeptide (Lys-Gly) (interchain with G-Cter in SUMO2). Position 804 is a phosphoserine (S804). The residue at position 904 (K904) is an N6-acetyllysine. Residues K908 and K916 each participate in a glycyl lysine isopeptide (Lys-Gly) (interchain with G-Cter in SUMO2) cross-link. A Phosphoserine modification is found at S929.

Belongs to the DEAD box helicase family. DDX46/PRP5 subfamily. In terms of assembly, component of the 17S U2 SnRNP complex, a ribonucleoprotein complex that contains small nuclear RNA (snRNA) U2 and a number of specific proteins. Within the 17S U2 SnRNP complex, DDX46 is part of the SF3B subcomplex, which is required for 'A' complex assembly formed by the stable binding of U2 snRNP to the branchpoint sequence in pre-mRNA. Recruited to the 17S U2 SnRNP complex following release of DDX42; DDX42 and DDX46 bind the SF3B subcomplex in a competitive manner.

Its subcellular location is the nucleus speckle. The protein localises to the nucleus. The protein resides in the cajal body. It carries out the reaction ATP + H2O = ADP + phosphate + H(+). Component of the 17S U2 SnRNP complex of the spliceosome, a large ribonucleoprotein complex that removes introns from transcribed pre-mRNAs. The 17S U2 SnRNP complex (1) directly participates in early spliceosome assembly and (2) mediates recognition of the intron branch site during pre-mRNA splicing by promoting the selection of the pre-mRNA branch-site adenosine, the nucleophile for the first step of splicing. Within the 17S U2 SnRNP complex, DDX46 plays essential roles during assembly of pre-spliceosome and proofreading of the branch site. The chain is Probable ATP-dependent RNA helicase DDX46 (DDX46) from Pongo abelii (Sumatran orangutan).